Reading from the N-terminus, the 547-residue chain is Mitogen-activated protein kinase 15 (547 aa).

Residues 1-20 (MCAAEVDRHVSQRYLIKRRL) are ubiquitin-conjugating. One can recognise a Protein kinase domain in the interval 14–305 (YLIKRRLGKG…AEQALQHPYV (292 aa)). ATP is bound by residues 20–28 (LGKGAYGIV) and Lys43. Asp138 serves as the catalytic Proton acceptor. Thr176 is subject to Phosphothreonine. A TXY motif is present at residues 176 to 178 (TEY). Tyr178 carries the phosphotyrosine modification. Positions 266–286 (LDALLPPDTPPEALDLLKRLL) are necessary to interact with ESRRA, to regulate its subcellular localization and to inhibit its transcriptional activity. Residues 301–380 (QHPYVQRFHC…SQRQSLKPGV (80 aa)) form a requires for interaction with GABARAP, MAP1LC3B AND GABARAPL1 region. The disordered stretch occupies residues 370 to 503 (ASQRQSLKPG…EAPEPRPGRR (134 aa)). 2 PXXXP motif repeats span residues 378–382 (PGVLP) and 385–389 (LAETP). 2 PXXXP motif; regulates binding with chromatin and interaction with PCNA repeats span residues 393 to 397 (RGPKP) and 401 to 405 (HGHDP). The span at 401–414 (HGHDPEHVEVRRQS) shows a compositional bias: basic and acidic residues. Arg449 bears the Omega-N-methylarginine mark. Positions 454-465 (SLTSQAAAQAAN) are enriched in polar residues. Residues 481 to 490 (AVGARRVPSR) show a composition bias toward low complexity. Residues 491-500 (LPREAPEPRP) show a composition bias toward basic and acidic residues.

Belongs to the protein kinase superfamily. CMGC Ser/Thr protein kinase family. MAP kinase subfamily. Interacts with CSK/c-Src, ABL1, RET and TGFB1I1. Interacts with GABARAP, MAP1LC3B and GABARAPL1; controls, in a kinase-dependent fashion, both basal and starvation-induced autophagy. Interacts with ESRRA; promotes re-localization of ESRRA to the cytoplasm through a XPO1-dependent mechanism then inhibits ESRRA transcriptional activity. Interacts with PCNA; the interaction is chromatin binding- and kinase activity-dependent and prevents MDM2-mediated PCNA destruction by inhibiting the association of PCNA with MDM2. Interacts with DVL2. Interacts with CLIC3; MAPK15 does not phosphorylates CLIC3. Post-translationally, autophosphorylated on Thr-176 and Tyr-178; activates the enzyme. In terms of processing, dephosphorylated by PTPN1. Ubiquitinated. Ubiquitination may allow its tight kinase activity regulation and rapid turnover. May be ubiquitinated by a SCF E3 ligase. Ubiquitously expressed at a weak level. Highest expression is found in testis and to a lower extent in lung.

The protein resides in the cytoplasm. It is found in the cytoskeleton. Its subcellular location is the cilium basal body. The protein localises to the cell junction. It localises to the tight junction. The protein resides in the microtubule organizing center. It is found in the centrosome. Its subcellular location is the centriole. The protein localises to the cytoplasmic vesicle. It localises to the autophagosome. The protein resides in the golgi apparatus. It is found in the nucleus. Its subcellular location is the spindle. The enzyme catalyses L-seryl-[protein] + ATP = O-phospho-L-seryl-[protein] + ADP + H(+). It carries out the reaction L-threonyl-[protein] + ATP = O-phospho-L-threonyl-[protein] + ADP + H(+). Its activity is regulated as follows. Activated by threonine and tyrosine phosphorylation. Inhibited by dual specificity phosphatases, such as DUSP1. Phosphorylation and activation in response to DNA damaging agents, serum stimulation. Constitutively activated when phosphorylated on Tyr-178. Activity depends on the relative rates of MAPK15 autophosphorylation and dephosphorylation by PTPN1. Its function is as follows. Atypical MAPK protein that regulates several process such as autophagy, ciliogenesis, protein trafficking/secretion and genome integrity, in a kinase activity-dependent manner. Controls both, basal and starvation-induced autophagy throught its interaction with GABARAP, MAP1LC3B and GABARAPL1 leading to autophagosome formation, SQSTM1 degradation and reduced MAP1LC3B inhibitory phosphorylation. Regulates primary cilium formation and the localization of ciliary proteins involved in cilium structure, transport, and signaling. Prevents the relocation of the sugar-adding enzymes from the Golgi to the endoplasmic reticulum, thereby restricting the production of sugar-coated proteins. Upon amino-acid starvation, mediates transitional endoplasmic reticulum site disassembly and inhibition of secretion. Binds to chromatin leading to MAPK15 activation and interaction with PCNA, that which protects genomic integrity by inhibiting MDM2-mediated degradation of PCNA. Regulates DA transporter (DAT) activity and protein expression via activation of RhoA. In response to H(2)O(2) treatment phosphorylates ELAVL1, thus preventing it from binding to the PDCD4 3'UTR and rendering the PDCD4 mRNA accessible to miR-21 and leading to its degradation and loss of protein expression. Also functions in a kinase activity-independent manner as a negative regulator of growth. Phosphorylates in vitro FOS and MBP. During oocyte maturation, plays a key role in the microtubule organization and mei- otic cell cycle progression in oocytes, fertilized eggs, and early embryos. Interacts with ESRRA promoting its re-localization from the nucleus to the cytoplasm and then prevents its transcriptional activity. This chain is Mitogen-activated protein kinase 15 (Mapk15), found in Rattus norvegicus (Rat).